Reading from the N-terminus, the 271-residue chain is MAEWKTKRTYDEILYETYNGIAKITINRPEVHNAFTPKTVAEMIDAFADARDDQNVGVIVLAGAGDKAFCSGGDQKVRGHGGYVGDDQIPRLNVLDLQRLIRVIPKPVVAMVSGYAIGGGHVLHIVCDLTIAADNAIFGQTGPKVGSFDAGYGSGYLARIVGHKKAREIWYLCRQYNAQEALDMGLVNTVVPLEQLEEETIKWCEEMLEKSPTALRFLKAAFNADTDGLAGIQQFAGDATLLYYTTDEAKEGRDSFKEKRKPDFGQFPRFP.

Residues Ser71–Gln75, Tyr83, Tyr115–Gly119, Thr141, Ser147, Tyr244, and Lys259 each bind substrate. Gln140–Gly142 serves as a coordination point for hydrogencarbonate. The span at Lys250–Asp263 shows a compositional bias: basic and acidic residues. Residues Lys250–Pro271 form a disordered region.

Belongs to the enoyl-CoA hydratase/isomerase family. MenB subfamily. Hydrogencarbonate is required as a cofactor.

The catalysed reaction is 2-succinylbenzoyl-CoA + H(+) = 1,4-dihydroxy-2-naphthoyl-CoA + H2O. It functions in the pathway quinol/quinone metabolism; 1,4-dihydroxy-2-naphthoate biosynthesis; 1,4-dihydroxy-2-naphthoate from chorismate: step 6/7. The protein operates within quinol/quinone metabolism; menaquinone biosynthesis. Converts o-succinylbenzoyl-CoA (OSB-CoA) to 1,4-dihydroxy-2-naphthoyl-CoA (DHNA-CoA). In Bacillus subtilis (strain 168), this protein is 1,4-dihydroxy-2-naphthoyl-CoA synthase.